A 319-amino-acid chain; its full sequence is Vomeronasal type-1 receptor 96 (319 aa).

Residues 1–19 (MNKVNILPSDTNIKITLFS) are Extracellular-facing. Residues 20 to 40 (EVSVGISANSVLFFAHLCMFF) traverse the membrane as a helical segment. Over 41-49 (EENRSKPID) the chain is Cytoplasmic. Residues 50–70 (LCIAFLSLTQLMLLVTMGLIA) form a helical membrane-spanning segment. Topologically, residues 71–93 (ADMFMSQGIWDSTTCRSIIYFHR) are extracellular. A disulfide bridge links Cys85 with Cys172. Residues 94 to 114 (LLRGFNLCAACLLHILWTFTL) form a helical membrane-spanning segment. Residues 115–134 (SPRSSCLTKFKHKSPHHISC) are Cytoplasmic-facing. The helical transmembrane segment at 135-155 (AFFSLCVLYMLFSSHLFVLII) threads the bilayer. At 156–193 (ATSNLTSDHFMYVTQSCSILPMSYSRTTMFSLVMVTRE) the chain is on the extracellular side. Asn159 is a glycosylation site (N-linked (GlcNAc...) asparagine). A helical transmembrane segment spans residues 194-214 (AFLISLMALFSGYMVTLLWRH). Topologically, residues 215 to 238 (KKQVQHLHSTSLSSKSSPQQRATR) are cytoplasmic. Residues 239-259 (TILLLMSFFVVLYILDIVIFQ) form a helical membrane-spanning segment. Topologically, residues 260 to 269 (SRTKFKDGSM) are extracellular. Residues 270-290 (FYSLHIIVSHSYATISPFVFI) form a helical membrane-spanning segment. The Cytoplasmic portion of the chain corresponds to 291–319 (FSDKRIIKFLGSMSGRIINICLFSDGYGP).

Belongs to the G-protein coupled receptor 1 family.

It is found in the cell membrane. Putative pheromone receptor implicated in the regulation of social as well as reproductive behavior. This chain is Vomeronasal type-1 receptor 96 (Vom1r96), found in Rattus norvegicus (Rat).